A 414-amino-acid chain; its full sequence is Gamma-glutamyl phosphate reductase (414 aa).

Belongs to the gamma-glutamyl phosphate reductase family.

The protein resides in the cytoplasm. The catalysed reaction is L-glutamate 5-semialdehyde + phosphate + NADP(+) = L-glutamyl 5-phosphate + NADPH + H(+). The protein operates within amino-acid biosynthesis; L-proline biosynthesis; L-glutamate 5-semialdehyde from L-glutamate: step 2/2. Functionally, catalyzes the NADPH-dependent reduction of L-glutamate 5-phosphate into L-glutamate 5-semialdehyde and phosphate. The product spontaneously undergoes cyclization to form 1-pyrroline-5-carboxylate. The protein is Gamma-glutamyl phosphate reductase of Clostridium beijerinckii (strain ATCC 51743 / NCIMB 8052) (Clostridium acetobutylicum).